The sequence spans 211 residues: Peptidyl-tRNA hydrolase (211 aa).

Tyr-15 contacts tRNA. His-20 (proton acceptor) is an active-site residue. Residues Phe-66, Asn-68, and Asn-114 each coordinate tRNA. The interval 189–211 (TKPPRPKATRPAQAQAAPQAGAD) is disordered. Residues 197-211 (TRPAQAQAAPQAGAD) are compositionally biased toward low complexity.

It belongs to the PTH family. As to quaternary structure, monomer.

The protein resides in the cytoplasm. The enzyme catalyses an N-acyl-L-alpha-aminoacyl-tRNA + H2O = an N-acyl-L-amino acid + a tRNA + H(+). Functionally, hydrolyzes ribosome-free peptidyl-tRNAs (with 1 or more amino acids incorporated), which drop off the ribosome during protein synthesis, or as a result of ribosome stalling. Catalyzes the release of premature peptidyl moieties from peptidyl-tRNA molecules trapped in stalled 50S ribosomal subunits, and thus maintains levels of free tRNAs and 50S ribosomes. In Acidovorax ebreus (strain TPSY) (Diaphorobacter sp. (strain TPSY)), this protein is Peptidyl-tRNA hydrolase.